We begin with the raw amino-acid sequence, 311 residues long: Aspartate carbamoyltransferase catalytic subunit (311 aa).

Carbamoyl phosphate-binding residues include arginine 59 and threonine 60. Lysine 87 is an L-aspartate binding site. Positions 109, 139, and 142 each coordinate carbamoyl phosphate. Positions 172 and 224 each coordinate L-aspartate. Positions 265 and 266 each coordinate carbamoyl phosphate.

The protein belongs to the aspartate/ornithine carbamoyltransferase superfamily. ATCase family. Heterododecamer (2C3:3R2) of six catalytic PyrB chains organized as two trimers (C3), and six regulatory PyrI chains organized as three dimers (R2).

It carries out the reaction carbamoyl phosphate + L-aspartate = N-carbamoyl-L-aspartate + phosphate + H(+). Its pathway is pyrimidine metabolism; UMP biosynthesis via de novo pathway; (S)-dihydroorotate from bicarbonate: step 2/3. In terms of biological role, catalyzes the condensation of carbamoyl phosphate and aspartate to form carbamoyl aspartate and inorganic phosphate, the committed step in the de novo pyrimidine nucleotide biosynthesis pathway. This is Aspartate carbamoyltransferase catalytic subunit from Streptococcus pyogenes serotype M1.